A 392-amino-acid polypeptide reads, in one-letter code: Elongation factor Tu (392 aa).

The region spanning 10 to 202 is the tr-type G domain; that stretch reads KVHVNVGTIG…VLDEYIEDPI (193 aa). Residues 19-26 form a G1 region; it reads GHVDHGKT. A GTP-binding site is contributed by 19-26; that stretch reads GHVDHGKT. Thr26 is a Mg(2+) binding site. Residues 60 to 64 form a G2 region; the sequence is GITIN. The G3 stretch occupies residues 81–84; sequence DCPG. GTP contacts are provided by residues 81 to 85 and 136 to 139; these read DCPGH and NKCD. The tract at residues 136–139 is G4; sequence NKCD. The tract at residues 174-176 is G5; sequence SAL.

It belongs to the TRAFAC class translation factor GTPase superfamily. Classic translation factor GTPase family. EF-Tu/EF-1A subfamily. In terms of assembly, monomer.

It is found in the cytoplasm. The catalysed reaction is GTP + H2O = GDP + phosphate + H(+). In terms of biological role, GTP hydrolase that promotes the GTP-dependent binding of aminoacyl-tRNA to the A-site of ribosomes during protein biosynthesis. This is Elongation factor Tu from Apple proliferation phytoplasma.